A 441-amino-acid polypeptide reads, in one-letter code: Deoxyguanosinetriphosphate triphosphohydrolase-like protein 1 (441 aa).

The HD domain maps to 62–255; that stretch reads RLTHSLEAAQ…MELADDIAYG (194 aa).

Belongs to the dGTPase family. Type 2 subfamily.

This is Deoxyguanosinetriphosphate triphosphohydrolase-like protein 1 from Vibrio cholerae serotype O1 (strain ATCC 39315 / El Tor Inaba N16961).